The following is a 265-amino-acid chain: Tryptophan synthase alpha chain (265 aa).

Active-site proton acceptor residues include glutamate 49 and glutamate 60.

The protein belongs to the TrpA family. Tetramer of two alpha and two beta chains.

It carries out the reaction (1S,2R)-1-C-(indol-3-yl)glycerol 3-phosphate + L-serine = D-glyceraldehyde 3-phosphate + L-tryptophan + H2O. It functions in the pathway amino-acid biosynthesis; L-tryptophan biosynthesis; L-tryptophan from chorismate: step 5/5. Its function is as follows. The alpha subunit is responsible for the aldol cleavage of indoleglycerol phosphate to indole and glyceraldehyde 3-phosphate. The protein is Tryptophan synthase alpha chain of Herminiimonas arsenicoxydans.